A 314-amino-acid chain; its full sequence is Homoserine O-acetyltransferase (314 aa).

Cys142 acts as the Acyl-thioester intermediate in catalysis. Substrate contacts are provided by Lys163 and Ser192. The active-site Proton acceptor is the His235. Glu237 is an active-site residue. Arg249 serves as a coordination point for substrate.

The protein belongs to the MetA family.

The protein resides in the cytoplasm. It carries out the reaction L-homoserine + acetyl-CoA = O-acetyl-L-homoserine + CoA. The protein operates within amino-acid biosynthesis; L-methionine biosynthesis via de novo pathway; O-acetyl-L-homoserine from L-homoserine: step 1/1. In terms of biological role, transfers an acetyl group from acetyl-CoA to L-homoserine, forming acetyl-L-homoserine. This Streptococcus pneumoniae serotype 19F (strain G54) protein is Homoserine O-acetyltransferase.